Here is a 172-residue protein sequence, read N- to C-terminus: NADH-ubiquinone oxidoreductase chain 6 (172 aa).

Transmembrane regions (helical) follow at residues 1–21, 38–58, 86–106, and 147–167; these read MNNY…GLAL, VGCL…VFLI, WLIL…ICVL, and CATW…FIII.

This sequence belongs to the complex I subunit 6 family. In terms of assembly, core subunit of respiratory chain NADH dehydrogenase (Complex I) which is composed of 45 different subunits.

Its subcellular location is the mitochondrion inner membrane. The enzyme catalyses a ubiquinone + NADH + 5 H(+)(in) = a ubiquinol + NAD(+) + 4 H(+)(out). Core subunit of the mitochondrial membrane respiratory chain NADH dehydrogenase (Complex I) which catalyzes electron transfer from NADH through the respiratory chain, using ubiquinone as an electron acceptor. Essential for the catalytic activity and assembly of complex I. The protein is NADH-ubiquinone oxidoreductase chain 6 (Mtnd6) of Mus musculus (Mouse).